Consider the following 193-residue polypeptide: Large ribosomal subunit protein uL18 (193 aa).

This sequence belongs to the universal ribosomal protein uL18 family. As to quaternary structure, part of the 50S ribosomal subunit. Contacts the 5S and 23S rRNAs.

Its function is as follows. This is one of the proteins that bind and probably mediate the attachment of the 5S RNA into the large ribosomal subunit, where it forms part of the central protuberance. The protein is Large ribosomal subunit protein uL18 of Methanobrevibacter smithii (strain ATCC 35061 / DSM 861 / OCM 144 / PS).